A 60-amino-acid polypeptide reads, in one-letter code: Acidic phospholipase A2 (60 aa).

Ca(2+) is bound by residues tyrosine 27, glycine 29, and glycine 31. The cysteines at positions 28 and 44 are disulfide-linked. Histidine 47 is an active-site residue. Position 48 (aspartate 48) interacts with Ca(2+).

Belongs to the phospholipase A2 family. Group II subfamily. D49 sub-subfamily. Monomer. Ca(2+) is required as a cofactor. Expressed by the venom gland.

The protein localises to the secreted. It catalyses the reaction a 1,2-diacyl-sn-glycero-3-phosphocholine + H2O = a 1-acyl-sn-glycero-3-phosphocholine + a fatty acid + H(+). Functionally, snake venom phospholipase A2 (PLA2) that exhibits an indirect hemolytic activity, a low myotoxicity, and induces edema. In addition, this enzyme has been shown to induce the release of some pro- and anti-inflammatory cytokines from human PBMC (IL12B, TNF-alpha, IL1B and IL6 but not variation has been observed for IL-8 and IL-10). PLA2 catalyzes the calcium-dependent hydrolysis of the 2-acyl groups in 3-sn-phosphoglycerides. The chain is Acidic phospholipase A2 from Bothrops leucurus (Whitetail lancehead).